The chain runs to 777 residues: Ribosome biogenesis protein ERB1 (777 aa).

A disordered region spans residues 1-122 (MAPTAPAKKR…RPNYRVVEDA (122 aa)). Residues 36–67 (SEDDSDFVASGDEDEEDEDEDEDEDKDEDDEH) show a composition bias toward acidic residues. WD repeat units follow at residues 430–469 (GHEGRVRSSAIDPTGLWLATGGDDGYVRIWLINPARQVWA), 473–513 (SSDE…PEVE), 562–604 (TVRS…SQIP), 606–645 (RKLSGLAQVAHFHPSRPLFFVATQRTIRCYDLQRLELVKV), 648–687 (PGARWISSFDIHPGGDNLIVGSYDRRLLWHDLDLSTRPYK), 691–731 (FHPQ…DLME), and 747–777 (VDSLGVMDVDWHPSEPWCISAGADGTCRLWM).

It belongs to the WD repeat BOP1/ERB1 family. Component of the NOP7 complex, composed of ERB1, NOP7 and YTM1. The complex is held together by ERB1, which interacts with NOP7 via its N-terminal domain and with YTM1 via a high-affinity interaction between the seven-bladed beta-propeller domains of the 2 proteins. The NOP7 complex associates with the 66S pre-ribosome.

Its subcellular location is the nucleus. The protein localises to the nucleolus. It is found in the nucleoplasm. Functionally, component of the NOP7 complex, which is required for maturation of the 25S and 5.8S ribosomal RNAs and formation of the 60S ribosome. The protein is Ribosome biogenesis protein ERB1 of Pyricularia oryzae (strain 70-15 / ATCC MYA-4617 / FGSC 8958) (Rice blast fungus).